The chain runs to 323 residues: Ankyrin repeat and SOCS box protein 11 (323 aa).

ANK repeat units lie at residues 64-93 (ADRSPLHEAAAQGRLLALKTLIAQGVNVNL), 97-126 (NRVSSLHEACLGGHVACAKALLENGAHVNG), 130-159 (HGATPLFNACCSGSAACVNVLLEFGAKAQL), 162-191 (HLASPIHEAVKRGHRECMEILLANNVNIDH), 195-224 (QLGTPLYVACTYQRVDCVKKLLELGASVDH), and 227-256 (WLDTPLHAAARQSNVEVIHLLTDYGANLKR). The 51-residue stretch at 273-323 (SVEQALLLREGPPALSQLCRLCVRKCLGRACHQAIHKLHLPEPLERFLLYQ) folds into the SOCS box domain.

Belongs to the ankyrin SOCS box (ASB) family. As to quaternary structure, substrate-recognition component of the ECS(ASB11) complex, composed of ASB11, CUL5, ELOB, ELOC and RNF7/RBX2.

The protein resides in the endoplasmic reticulum. It participates in protein modification; protein ubiquitination. Substrate-recognition component of a cullin-5-RING E3 ubiquitin-protein ligase complex (ECS complex, also named CRL5 complex), which mediates the ubiquitination and subsequent proteasomal degradation of target proteins, such as BIK, DIRAS2 and RPN1. The ECS(ASB11) complex acts as a regulator of the endoplasmic reticulum unfolded protein response by mediating ubiquitination and degradation of BIK. This Homo sapiens (Human) protein is Ankyrin repeat and SOCS box protein 11.